The following is a 167-amino-acid chain: V-type proton ATPase subunit c' (167 aa).

Residues 1–13 (MAEIMADSELAPK) lie on the Lumenal side of the membrane. Residues 14-34 (FAPFIGMAGIAAAMIFGSAGA) traverse the membrane as a helical segment. Topologically, residues 35–59 (AYGTAKSGIGIAGVGTFRPDLIMKC) are cytoplasmic. A helical membrane pass occupies residues 60-80 (LIPVVMSGIIAVYALVVAVLI). Residues 81 to 101 (AQDLGPPGSGQHYSLFNGFMH) are Lumenal-facing. The chain crosses the membrane as a helical span at residues 102 to 122 (LACGLSVGLTGLAAGYCIGIV). At 123–140 (GDKGVRSFMLQSRIFVGM) the chain is on the cytoplasmic side. The chain crosses the membrane as a helical span at residues 141–161 (VLILIFGEVLGLYGLIVALIL). The Lumenal portion of the chain corresponds to 162–167 (NTKSKG).

The protein belongs to the V-ATPase proteolipid subunit family. In terms of assembly, V-ATPase is a heteromultimeric enzyme composed of a peripheral catalytic V1 complex (components A to H) attached to an integral membrane V0 proton pore complex (components: a, c, c', c'', d, e, f and VOA1). The decameric c-ring forms the proton-conducting pore, and is composed of eight proteolipid subunits c, one subunit c' and one subunit c''.

It is found in the vacuole membrane. Functionally, proton-conducting pore forming subunit of the V0 complex of vacuolar(H+)-ATPase (V-ATPase), a multisubunit enzyme composed of a peripheral complex (V1) that hydrolyzes ATP and a membrane integral complex (V0) that translocates protons. V-ATPase is responsible for acidifying and maintaining the pH of intracellular compartments. The sequence is that of V-type proton ATPase subunit c' (vma-11) from Neurospora crassa (strain ATCC 24698 / 74-OR23-1A / CBS 708.71 / DSM 1257 / FGSC 987).